The chain runs to 312 residues: Very-long-chain 3-oxoacyl-CoA reductase (312 aa).

Helical transmembrane passes span 33–53 (VWGI…WAVV), 181–201 (GVIL…LTLY), and 274–294 (HAFM…NLLM). 48–77 (GAWAVVTGATDGIGKAYAKELAKRGMKVAL) is a binding site for NADP(+). S188 serves as a coordination point for substrate. Y201 functions as the Proton acceptor in the catalytic mechanism.

It belongs to the short-chain dehydrogenases/reductases (SDR) family. 17-beta-HSD 3 subfamily. As to expression, brain.

It is found in the endoplasmic reticulum membrane. It carries out the reaction a very-long-chain (3R)-3-hydroxyacyl-CoA + NADP(+) = a very-long-chain 3-oxoacyl-CoA + NADPH + H(+). The enzyme catalyses 17beta-estradiol + NAD(+) = estrone + NADH + H(+). It catalyses the reaction 17beta-estradiol + NADP(+) = estrone + NADPH + H(+). The catalysed reaction is 3-oxooctadecanoyl-CoA + NADPH + H(+) = (3R)-hydroxyoctadecanoyl-CoA + NADP(+). It carries out the reaction (7Z,10Z,13Z,16Z)-3-oxodocosatetraenoyl-CoA + NADPH + H(+) = (3R)-hydroxy-(7Z,10Z,13Z,16Z)-docosatetraenoyl-CoA + NADP(+). The enzyme catalyses 3-oxo-(7Z,10Z,13Z,16Z,19Z)-docosapentaenoyl-CoA + NADPH + H(+) = (3R)-hydroxy-(7Z,10Z,13Z,16Z,19Z)-docosapentaenoyl-CoA + NADP(+). It catalyses the reaction (8Z,11Z,14Z)-3-oxoeicosatrienoyl-CoA + NADPH + H(+) = (3R)-hydroxy-(8Z,11Z,14Z)-eicosatrienoyl-CoA + NADP(+). The protein operates within lipid metabolism; fatty acid biosynthesis. It functions in the pathway steroid biosynthesis; estrogen biosynthesis. Its function is as follows. Catalyzes the second of the four reactions of the long-chain fatty acids elongation cycle. This endoplasmic reticulum-bound enzymatic process, allows the addition of two carbons to the chain of long- and very long-chain fatty acids/VLCFAs per cycle. This enzyme has a 3-ketoacyl-CoA reductase activity, reducing 3-ketoacyl-CoA to 3-hydroxyacyl-CoA, within each cycle of fatty acid elongation. Thereby, it may participate in the production of VLCFAs of different chain lengths that are involved in multiple biological processes as precursors of membrane lipids and lipid mediators. May also catalyze the transformation of estrone (E1) into estradiol (E2) and play a role in estrogen formation. In Anas platyrhynchos (Mallard), this protein is Very-long-chain 3-oxoacyl-CoA reductase (HSD17B12).